The sequence spans 146 residues: uncharacterized protein (146 aa).

One can recognise an N-acetyltransferase domain in the interval 7 to 146 (LQINYKTDEL…EGHDILIWNP (140 aa)).

This is an uncharacterized protein from Staphylococcus epidermidis (strain ATCC 12228 / FDA PCI 1200).